The primary structure comprises 287 residues: Eukaryotic translation initiation factor 3 subunit F (287 aa).

In terms of domain architecture, MPN spans 12-142 (VRVHPVVLFQ…IKAYVCVSLG (131 aa)).

The protein belongs to the eIF-3 subunit F family. In terms of assembly, component of the eukaryotic translation initiation factor 3 (eIF-3) complex.

The protein localises to the cytoplasm. In terms of biological role, component of the eukaryotic translation initiation factor 3 (eIF-3) complex, which is involved in protein synthesis of a specialized repertoire of mRNAs and, together with other initiation factors, stimulates binding of mRNA and methionyl-tRNAi to the 40S ribosome. The eIF-3 complex specifically targets and initiates translation of a subset of mRNAs involved in cell proliferation. The protein is Eukaryotic translation initiation factor 3 subunit F of Anopheles gambiae (African malaria mosquito).